A 100-amino-acid chain; its full sequence is Putative pterin-4-alpha-carbinolamine dehydratase (100 aa).

This sequence belongs to the pterin-4-alpha-carbinolamine dehydratase family.

The enzyme catalyses (4aS,6R)-4a-hydroxy-L-erythro-5,6,7,8-tetrahydrobiopterin = (6R)-L-erythro-6,7-dihydrobiopterin + H2O. The chain is Putative pterin-4-alpha-carbinolamine dehydratase from Allorhizobium ampelinum (strain ATCC BAA-846 / DSM 112012 / S4) (Agrobacterium vitis (strain S4)).